The following is a 794-amino-acid chain: Protein sel-1 homolog 1 (794 aa).

A signal peptide spans 1-21 (MQVRVRLLLLLCAVLLGSAAA). The tract at residues 22–737 (SSDEETNQDE…DLFTQLDMDQ (716 aa)) is interaction with ERLEC1, OS9 and SYVN1. At 22–738 (SSDEETNQDE…LFTQLDMDQL (717 aa)) the chain is on the lumenal side. Over residues 23 to 32 (SDEETNQDES) the composition is skewed to acidic residues. Disordered stretches follow at residues 23–46 (SDEE…GSVK) and 73–105 (QDEE…KTYE). One can recognise a Fibronectin type-II domain in the interval 122-170 (AHGEPCHFPFLFLDKEYDECTSDGREDGRLWCATTYDYKTDEKWGFCET). Disulfide bonds link cysteine 127-cysteine 153 and cysteine 141-cysteine 168. 9 Sel1-like repeats span residues 183 to 218 (AEAI…GMNH), 219 to 254 (TKAL…EEGS), 255 to 290 (PKGQ…LGGN), 291 to 326 (LIAH…NHVA), 373 to 409 (VQAQ…NAGN), 410 to 446 (SHAM…DMGN), 447 to 482 (PVGQ…EQGW), 483 to 518 (VDGQ…QGGH), and 519 to 554 (ILAF…ERGR). Residues asparagine 195 and asparagine 217 are each glycosylated (N-linked (GlcNAc...) asparagine). A glycan (N-linked (GlcNAc...) asparagine) is linked at asparagine 272. The interval 352–537 (NSGMLEEDLI…MHASGTGVMR (186 aa)) is important for homodimerization and oligomerization. N-linked (GlcNAc...) asparagine glycosylation is present at asparagine 431. Residue asparagine 608 is glycosylated (N-linked (GlcNAc...) asparagine). 2 Sel1-like repeats span residues 627 to 662 (TVAR…EQQH) and 664 to 699 (AQAM…EASP). The tract at residues 643-723 (TDVDYETAFI…VVYFLQYIRE (81 aa)) is interaction with SYVN1. The segment at 738 to 794 (LLGPEWDLYLMTIIALLLGTVIAYRQRQHQDIPVPRPPGPRPAPPQQEGPPEQQPPQ) is mediates retention in the endoplasmic reticulum. Residues 739–759 (LGPEWDLYLMTIIALLLGTVI) form a helical membrane-spanning segment. The Cytoplasmic portion of the chain corresponds to 760 to 794 (AYRQRQHQDIPVPRPPGPRPAPPQQEGPPEQQPPQ). The disordered stretch occupies residues 767-794 (QDIPVPRPPGPRPAPPQQEGPPEQQPPQ). Residues 771 to 794 (VPRPPGPRPAPPQQEGPPEQQPPQ) are compositionally biased toward pro residues.

Belongs to the sel-1 family. In terms of assembly, homodimer and homooligomer. May form a complex with ERLEC1, HSPA5, OS9, and SYVN1. Interacts with FOXRED2 and EDEM1. Interacts with LPL and LMF1; may stabilize the complex formed by LPL and LMF1 and thereby promote the export of LPL dimers. Component of the HRD1 complex, which comprises at least SYNV1/HRD1, DERL1/2, FAM8A1, HERPUD1/HERP, OS9, SEL1L and UBE2J1. SYNV1 assembles with SEL1L and FAM8A1 through its transmembrane domains, but interaction with its cytoplasmic domain is required to confer stability to FAM8A1 and enhance recruitment of HERPUD1. The interaction with SYNV1/HRD1 is direct. N-glycosylated.

The protein localises to the endoplasmic reticulum membrane. In terms of biological role, plays a role in the endoplasmic reticulum quality control (ERQC) system also called ER-associated degradation (ERAD) involved in ubiquitin-dependent degradation of misfolded endoplasmic reticulum proteins. Enhances SYVN1 stability. Plays a role in LPL maturation and secretion. Required for normal differentiation of the pancreas epithelium, and for normal exocrine function and survival of pancreatic cells. May play a role in Notch signaling. The chain is Protein sel-1 homolog 1 (Sel1l) from Rattus norvegicus (Rat).